A 908-amino-acid polypeptide reads, in one-letter code: Alanine--tRNA ligase (908 aa).

Residues His-596, His-600, Cys-698, and His-702 each coordinate Zn(2+).

It belongs to the class-II aminoacyl-tRNA synthetase family. Zn(2+) is required as a cofactor.

Its subcellular location is the cytoplasm. The enzyme catalyses tRNA(Ala) + L-alanine + ATP = L-alanyl-tRNA(Ala) + AMP + diphosphate. Its function is as follows. Catalyzes the attachment of alanine to tRNA(Ala) in a two-step reaction: alanine is first activated by ATP to form Ala-AMP and then transferred to the acceptor end of tRNA(Ala). Also edits incorrectly charged Ser-tRNA(Ala) and Gly-tRNA(Ala) via its editing domain. The protein is Alanine--tRNA ligase of Lysinibacillus sphaericus (strain C3-41).